An 86-amino-acid chain; its full sequence is MAVKIRLKRMGAKNNPFYRVVVADARSPRDGRVIDEIGYYDPVKQPAAVVINEEKALDWLKKGAQLTETARALFRKAGVLQKFQQK.

Belongs to the bacterial ribosomal protein bS16 family.

In Carboxydothermus hydrogenoformans (strain ATCC BAA-161 / DSM 6008 / Z-2901), this protein is Small ribosomal subunit protein bS16.